We begin with the raw amino-acid sequence, 505 residues long: Aspartyl/glutamyl-tRNA(Asn/Gln) amidotransferase subunit B (505 aa).

It belongs to the GatB/GatE family. GatB subfamily. In terms of assembly, heterotrimer of A, B and C subunits.

It catalyses the reaction L-glutamyl-tRNA(Gln) + L-glutamine + ATP + H2O = L-glutaminyl-tRNA(Gln) + L-glutamate + ADP + phosphate + H(+). The enzyme catalyses L-aspartyl-tRNA(Asn) + L-glutamine + ATP + H2O = L-asparaginyl-tRNA(Asn) + L-glutamate + ADP + phosphate + 2 H(+). In terms of biological role, allows the formation of correctly charged Asn-tRNA(Asn) or Gln-tRNA(Gln) through the transamidation of misacylated Asp-tRNA(Asn) or Glu-tRNA(Gln) in organisms which lack either or both of asparaginyl-tRNA or glutaminyl-tRNA synthetases. The reaction takes place in the presence of glutamine and ATP through an activated phospho-Asp-tRNA(Asn) or phospho-Glu-tRNA(Gln). The chain is Aspartyl/glutamyl-tRNA(Asn/Gln) amidotransferase subunit B from Corynebacterium jeikeium (strain K411).